The following is a 444-amino-acid chain: Nuclear envelope integral membrane protein 1 (444 aa).

A signal peptide spans 1–43 (MAGGMKVAVSPAVGPGPWGSGVGGGGTVRLLLILSGCLVYGTA). Residue asparagine 125 is glycosylated (N-linked (GlcNAc...) asparagine). The next 5 membrane-spanning stretches (helical) occupy residues 161–181 (PKLFLVFLLGLMLFFCGDLLS), 186–206 (FYYSTGMTVGIVASLLIIIFI), 216–236 (PIYVILVGGWSFSLYLIQLVF), 245–265 (CYWQYLLSYVLTVGFMSFAVC), and 289–309 (LCFMYSGIQIPHIALAIIIIA). An a; required for its colocalization with lamins at the nuclear envelope region spans residues 186-297 (FYYSTGMTVG…GLCFMYSGIQ (112 aa)). Positions 336 to 405 (PVPPRLLTEE…LTPNEVSVHE (70 aa)) are b; required for interaction with RAN-GTP. Positions 336–444 (PVPPRLLTEE…PAITQNNFLT (109 aa)) are required for nuclear localization. 3 positions are modified to phosphoserine: serine 368, serine 424, and serine 425.

It belongs to the NEMP family. As to quaternary structure, homooligomer. Interacts with RAN-GTP. Interacts with EMD. Phosphorylation may regulate its interaction with RAN-GTP.

It is found in the nucleus inner membrane. It localises to the nucleus envelope. Together with EMD, contributes to nuclear envelope stiffness in germ cells. Required for female fertility. Essential for normal erythropoiesis. Required for efficient nuclear envelope opening and enucleation during the late stages of erythroblast maturation. The chain is Nuclear envelope integral membrane protein 1 (NEMP1) from Homo sapiens (Human).